We begin with the raw amino-acid sequence, 180 residues long: ATP-dependent protease subunit HslV (180 aa).

Thr-8 is an active-site residue. Residues Ala-165, Cys-168, and Thr-171 each contribute to the Na(+) site.

It belongs to the peptidase T1B family. HslV subfamily. In terms of assembly, a double ring-shaped homohexamer of HslV is capped on each side by a ring-shaped HslU homohexamer. The assembly of the HslU/HslV complex is dependent on binding of ATP.

The protein resides in the cytoplasm. It catalyses the reaction ATP-dependent cleavage of peptide bonds with broad specificity.. With respect to regulation, allosterically activated by HslU binding. In terms of biological role, protease subunit of a proteasome-like degradation complex believed to be a general protein degrading machinery. The protein is ATP-dependent protease subunit HslV of Staphylococcus epidermidis (strain ATCC 12228 / FDA PCI 1200).